A 352-amino-acid chain; its full sequence is Protein RecA (352 aa).

65 to 72 (GPESSGKT) serves as a coordination point for ATP.

It belongs to the RecA family.

It is found in the cytoplasm. In terms of biological role, can catalyze the hydrolysis of ATP in the presence of single-stranded DNA, the ATP-dependent uptake of single-stranded DNA by duplex DNA, and the ATP-dependent hybridization of homologous single-stranded DNAs. It interacts with LexA causing its activation and leading to its autocatalytic cleavage. The protein is Protein RecA of Pseudomonas fluorescens (strain SBW25).